A 695-amino-acid polypeptide reads, in one-letter code: Probable serine/threonine-protein kinase abkD (695 aa).

A compositionally biased stretch (polar residues) spans 105-119 (TTKPQPCQAKPPSSK). The interval 105–149 (TTKPQPCQAKPPSSKQQQQQQQQQQQQQQQQQQQQSKKKTSKDRL) is disordered. Positions 118–150 (SKQQQQQQQQQQQQQQQQQQQQSKKKTSKDRLR) form a coiled coil. The segment covering 120–139 (QQQQQQQQQQQQQQQQQQQQ) has biased composition (low complexity). Residues 177–193 (TIASILAAIALIIYSYE) form a helical membrane-spanning segment. A Protein kinase domain is found at 317–695 (DFDRLPIAAA…LIKDQMKKLG (379 aa)). ATP-binding positions include 323 to 331 (IAAASLAQV) and K345. D477 acts as the Proton acceptor in catalysis.

Belongs to the protein kinase superfamily. ADCK protein kinase family.

The protein resides in the membrane. In Dictyostelium discoideum (Social amoeba), this protein is Probable serine/threonine-protein kinase abkD (abkD).